Reading from the N-terminus, the 773-residue chain is DNA gyrase subunit B (773 aa).

The Toprim domain occupies 416-530 (SEIFLVEGDS…QGHVFIAQAP (115 aa)). Positions 422, 495, and 497 each coordinate Mg(2+).

The protein belongs to the type II topoisomerase GyrB family. Heterotetramer, composed of two GyrA and two GyrB chains. In the heterotetramer, GyrA contains the active site tyrosine that forms a transient covalent intermediate with DNA, while GyrB binds cofactors and catalyzes ATP hydrolysis. Mg(2+) serves as cofactor. Mn(2+) is required as a cofactor. It depends on Ca(2+) as a cofactor.

The protein localises to the cytoplasm. The enzyme catalyses ATP-dependent breakage, passage and rejoining of double-stranded DNA.. In terms of biological role, a type II topoisomerase that negatively supercoils closed circular double-stranded (ds) DNA in an ATP-dependent manner to modulate DNA topology and maintain chromosomes in an underwound state. Negative supercoiling favors strand separation, and DNA replication, transcription, recombination and repair, all of which involve strand separation. Also able to catalyze the interconversion of other topological isomers of dsDNA rings, including catenanes and knotted rings. Type II topoisomerases break and join 2 DNA strands simultaneously in an ATP-dependent manner. This is DNA gyrase subunit B from Helicobacter pylori (strain J99 / ATCC 700824) (Campylobacter pylori J99).